The primary structure comprises 323 residues: Phosphoribosylaminoimidazole-succinocarboxamide synthase (323 aa).

It belongs to the SAICAR synthetase family.

The enzyme catalyses 5-amino-1-(5-phospho-D-ribosyl)imidazole-4-carboxylate + L-aspartate + ATP = (2S)-2-[5-amino-1-(5-phospho-beta-D-ribosyl)imidazole-4-carboxamido]succinate + ADP + phosphate + 2 H(+). Its pathway is purine metabolism; IMP biosynthesis via de novo pathway; 5-amino-1-(5-phospho-D-ribosyl)imidazole-4-carboxamide from 5-amino-1-(5-phospho-D-ribosyl)imidazole-4-carboxylate: step 1/2. The polypeptide is Phosphoribosylaminoimidazole-succinocarboxamide synthase (Azobacteroides pseudotrichonymphae genomovar. CFP2).